The sequence spans 318 residues: Protoheme IX farnesyltransferase (318 aa).

Helical transmembrane passes span Ile29 to Val49, Pro51 to Ile71, Leu102 to Leu122, Leu123 to Leu143, Ile151 to Gly171, Leu179 to Ile199, Ala219 to Val239, Pro241 to Ile261, and Leu280 to Leu300.

This sequence belongs to the UbiA prenyltransferase family. Protoheme IX farnesyltransferase subfamily.

It is found in the cell inner membrane. The catalysed reaction is heme b + (2E,6E)-farnesyl diphosphate + H2O = Fe(II)-heme o + diphosphate. It participates in porphyrin-containing compound metabolism; heme O biosynthesis; heme O from protoheme: step 1/1. Its function is as follows. Converts heme B (protoheme IX) to heme O by substitution of the vinyl group on carbon 2 of heme B porphyrin ring with a hydroxyethyl farnesyl side group. The polypeptide is Protoheme IX farnesyltransferase (Trichormus variabilis (strain ATCC 29413 / PCC 7937) (Anabaena variabilis)).